A 129-amino-acid polypeptide reads, in one-letter code: UPF0344 protein USA300HOU_0928 (129 aa).

4 helical membrane passes run 1–21, 36–56, 67–87, and 99–119; these read MLHL…ATYL, LHMI…WILI, MLLT…EVSI, and MFWI…ILPL.

Belongs to the UPF0344 family.

The protein resides in the cell membrane. In Staphylococcus aureus (strain USA300 / TCH1516), this protein is UPF0344 protein USA300HOU_0928.